Reading from the N-terminus, the 579-residue chain is MSGRRRNHPGRLASIPGLRTRTGSRNQHPGIANYPADSSDFRPAQQRRALEQREQQAGQLDPARRSPSMPSANRYLPPLGQQQSEPQHNSAPPCGPYPGERIKVTRAAAQRSREMGYRMYWMVQRAATADGADKSGLTALTWPVVTNFAVDSAMAVALANTLFFAAASGESKSKVALYLLITIAPFAVIAPLIGPALDRLQHGRRVALATSFVLRTGLATLLIMNYDGATGSYPSMVLYPCALAMMVLSKSFSVLRSAVTPRVMPPSIDLVRVNSRLTVFGLLGGTIAGGAIAAGVEFVCAHLFKLPGALFVVAAITISGALLSMRIPRWVEVTAGEIPATLSYRLHRKPLRQSWPEEVKKVSGRLRQPLGRNIITSLWGNCTIKVMVGFLFLYPAFVAKEHQANGWVQLGMLGLIGTAAAIGNFAGNFTSARLQLGRPAVLVVRCTIAVTVLALAASVAGNLLMTTIATLITSGSSAIAKASLDASLQNDLPEESRASGFGRSESTLQLAWVLGGALGVMVYTDLWVGFTAVSALLILGLAQTVVSFRGDSLIPGLGGNRPVMIEQESMRRAAAVSPQ.

The interval 1-100 (MSGRRRNHPG…APPCGPYPGE (100 aa)) is disordered. Residues 80-90 (GQQQSEPQHNS) are compositionally biased toward polar residues. 11 helical membrane passes run 148-168 (FAVDSAMAVALANTLFFAAAS), 175-195 (VALYLLITIAPFAVIAPLIGP), 206-226 (VALATSFVLRTGLATLLIMNY), 228-248 (GATGSYPSMVLYPCALAMMVL), 279-299 (VFGLLGGTIAGGAIAAGVEFV), 303-323 (LFKLPGALFVVAAITISGALL), 378-398 (LWGNCTIKVMVGFLFLYPAFV), 407-427 (WVQLGMLGLIGTAAAIGNFAG), 448-468 (IAVTVLALAASVAGNLLMTTI), 504-524 (SESTLQLAWVLGGALGVMVYT), and 526-546 (LWVGFTAVSALLILGLAQTVV).

The protein to M.tuberculosis Rv0876c.

It is found in the cell membrane. This is an uncharacterized protein from Mycobacterium leprae (strain TN).